Here is a 706-residue protein sequence, read N- to C-terminus: MKSIILFVLSLLLILEKQAAVMGQKGGSKGQLSSGSSRFPHRHRSQHYSGQKDKQHTESKGSFSIQHTYHVDANDHDRTRKSQQYYLNAQHKTTKSKQHLRRRQRLLNYKQKGRGRVKPKRHFHLIVIHRKGGQVHHGTQNPSQDQGNSPSGKGIFRQYSNTEERLWFRGLSKEQASASGAQKGRTQGGSQTNYVLQTEELVANKQQNKQQRETQNSHRNKGHYQNVFEVREEHSSKLQTSLHPAHQHRLQHGYKDIFTTQNELLVYNKNQHQTKNLNQDQEHGQKAHKGSYQSSSTEERQPNHEENSVQKGVPKGSISIQTEEKIYGKSQNQVTIPSQDQEHGHKENKISYQSSSAEERRLNSGEKGIQKGVPKGSISIQTEEKIYGKSQNQVTIPSQDQEHGHKENKISYQSSSAEERRLNSGEKGIQKGVPKGSISIQTEEKIYGKSQNQVTIPSQDQEHGHKENKISYQSSSTEERRLNSGEKGIQRGVSKGSISIQTEEKIHGKSQNQVAIPSQDQEHGHKENKISYQSSSAEERQLNSGEKGIQKGVSKGSISIQTEEKIYGKSQNQVTIPSQDQEHGHKENKIAYQSSSTEERQLNYGGKSIQKDVSQSSLSFQTEKLVEGKSQIQTPNPNQGQWSGQNAKGNSGKSADREQDLLSHEQEGRYQQEFSGAHNTVNIEHEVAYDDLLTQQYNEDRNPVST.

An N-terminal signal peptide occupies residues 1-23 (MKSIILFVLSLLLILEKQAAVMG). Disordered stretches follow at residues 25–62 (KGGS…SKGS), 131–156 (KGGQ…KGIF), and 276–678 (NLNQ…SGAH). Over residues 50–59 (GQKDKQHTES) the composition is skewed to basic and acidic residues. A compositionally biased stretch (polar residues) spans 137 to 151 (HGTQNPSQDQGNSPS). Over residues 297-308 (TEERQPNHEENS) the composition is skewed to basic and acidic residues. Residues 329-339 (KSQNQVTIPSQ) show a composition bias toward polar residues. Residues 340 to 349 (DQEHGHKENK) show a composition bias toward basic and acidic residues. A compositionally biased stretch (polar residues) spans 389–399 (KSQNQVTIPSQ). Residues 400–409 (DQEHGHKENK) show a composition bias toward basic and acidic residues. Positions 449–459 (KSQNQVTIPSQ) are enriched in polar residues. Residues 460-469 (DQEHGHKENK) show a composition bias toward basic and acidic residues. Residues 509–519 (KSQNQVAIPSQ) are compositionally biased toward polar residues. Residues 520–529 (DQEHGHKENK) show a composition bias toward basic and acidic residues. Over residues 569 to 579 (KSQNQVTIPSQ) the composition is skewed to polar residues. Over residues 580 to 589 (DQEHGHKENK) the composition is skewed to basic and acidic residues. Composition is skewed to polar residues over residues 611-622 (KDVSQSSLSFQT) and 630-653 (SQIQ…NSGK). Basic and acidic residues predominate over residues 654-670 (SADREQDLLSHEQEGRY).

This sequence belongs to the semenogelin family. As to quaternary structure, interacts with SERPINA5.

Its subcellular location is the secreted. Functionally, participates in the formation of a gel matrix (sperm coagulum) entrapping the accessory gland secretions and ejaculated spermatozoa. The protein is Semenogelin-2 (SEMG2) of Macaca mulatta (Rhesus macaque).